Here is a 104-residue protein sequence, read N- to C-terminus: Large ribosomal subunit protein uL24 (104 aa).

The protein belongs to the universal ribosomal protein uL24 family. In terms of assembly, part of the 50S ribosomal subunit.

Its function is as follows. One of two assembly initiator proteins, it binds directly to the 5'-end of the 23S rRNA, where it nucleates assembly of the 50S subunit. Functionally, one of the proteins that surrounds the polypeptide exit tunnel on the outside of the subunit. In Mesorhizobium japonicum (strain LMG 29417 / CECT 9101 / MAFF 303099) (Mesorhizobium loti (strain MAFF 303099)), this protein is Large ribosomal subunit protein uL24.